We begin with the raw amino-acid sequence, 216 residues long: Dimethylamine corrinoid protein 1 (216 aa).

The B12-binding N-terminal domain maps to 1-91 (MTSKEELLQE…DMPAGTETKK (91 aa)). Residues 92–216 (LGVIVNGTVE…AKAKELLVGK (125 aa)) enclose the B12-binding domain. Methylcob(III)alamin is bound at residue histidine 105.

The protein belongs to the methylamine corrinoid protein family.

It participates in one-carbon metabolism; methanogenesis from dimethylamine. Acts as a methyl group carrier between MtbB and MtbA. This is Dimethylamine corrinoid protein 1 (mtbC1) from Methanosarcina mazei (strain ATCC BAA-159 / DSM 3647 / Goe1 / Go1 / JCM 11833 / OCM 88) (Methanosarcina frisia).